Here is a 242-residue protein sequence, read N- to C-terminus: Linker for activation of T-cells family member 1 (242 aa).

The Extracellular segment spans residues 1–4 (MEAD). Residues 5–28 (ALSPVGLGLLLLPFLVTLLAALCV) form a helical; Signal-anchor for type III membrane protein membrane-spanning segment. 2 S-palmitoyl cysteine lipidation sites follow: Cys-27 and Cys-30. At 29–242 (RCRELPVSYD…PDYENLQELN (214 aa)) the chain is on the cytoplasmic side. Thr-40 bears the Phosphothreonine mark. Residues Ser-41, Ser-44, Ser-87, Ser-104, Ser-109, and Ser-112 each carry the phosphoserine modification. The interval 78 to 118 (QPDLLPIPRSPQPLGGSHRMPSSQQNSDDANSVASYENQEP) is disordered. Residues 97 to 115 (MPSSQQNSDDANSVASYEN) show a composition bias toward polar residues. An interaction with PLCG1 region spans residues 136 to 139 (YLVV). Tyr-175 carries the post-translational modification Phosphotyrosine. Interaction with GRB2, GRAP2 and PIK3R1 regions lie at residues 175 to 178 (YVNV) and 195 to 198 (YVNV). The tract at residues 176–242 (VNVPESEESA…PDYENLQELN (67 aa)) is disordered. Residues Ser-199, Ser-212, and Ser-215 each carry the phosphoserine modification. The segment covering 217–234 (EVEDEGEEEGVDGEEAPD) has biased composition (acidic residues). A Phosphotyrosine modification is found at Tyr-235.

In terms of assembly, when phosphorylated, interacts directly with the PIK3R1 subunit of phosphoinositide 3-kinase and the SH2 domains of GRB2, GRAP, GRAP2, PLCG1 and PLCG2. Interacts indirectly with CBL, SOS, VAV, and LCP2. Interacts with SHB and SKAP2. Interacts with FCGR1A. Interacts with CLNK. Interacts with GRB2, PLCG1 and THEMIS upon TCR activation in thymocytes. Interacts with THEMIS2. In terms of processing, phosphorylated on tyrosines by ZAP70 upon TCR activation, or by SYK upon other immunoreceptor activation; which leads to the recruitment of multiple signaling molecules. Is one of the most prominently tyrosine-phosphorylated proteins detected following TCR engagement. May be dephosphorylated by PTPRJ. Phosphorylated by ITK leading to the recruitment of VAV1 to LAT-containing complexes. Post-translationally, palmitoylation of Cys-27 and Cys-30 is required for raft targeting and efficient phosphorylation. Phosphorylated on tyrosines by ZAP70 upon TCR activation, or by SYK upon other immunoreceptor activation; which leads to the recruitment of multiple signaling molecules. Is one of the most prominently tyrosine-phosphorylated proteins detected following TCR engagement. May be dephosphorylated by PTPRJ. Phosphorylated by ITK leading to the recruitment of VAV1 to LAT-containing complexes. In terms of processing, 'Lys-63'-linked ubiquitinated by TRAF6. In terms of tissue distribution, expressed in T-cells and mast cells.

It localises to the cell membrane. Its function is as follows. Required for TCR (T-cell antigen receptor)- and pre-TCR-mediated signaling, both in mature T-cells and during their development. Involved in FCGR3 (low affinity immunoglobulin gamma Fc region receptor III)-mediated signaling in natural killer cells and FCER1 (high affinity immunoglobulin epsilon receptor)-mediated signaling in mast cells. Couples activation of these receptors and their associated kinases with distal intracellular events such as mobilization of intracellular calcium stores, PKC activation, MAPK activation or cytoskeletal reorganization through the recruitment of PLCG1, GRB2, GRAP2, and other signaling molecules. The sequence is that of Linker for activation of T-cells family member 1 (Lat) from Mus musculus (Mouse).